A 184-amino-acid chain; its full sequence is MKLSKIALAAALVFGINSVATAENETPAPKVSSTKGEIQLKGEIVNSACGLAASSSPVIVDFSEIPTSALANLQKAGNIKKDIELQDCDTTVAKTATVSYTPSVVNAVNKDLASFVSGNASGAGIGLMDAGSKAVKWNTATTPVQLINGVSKIPFVAYVQAESADAKVTPGEFQAVINFQVDYQ.

Residues 1–22 (MKLSKIALAAALVFGINSVATA) form the signal peptide. The cysteines at positions 49 and 88 are disulfide-linked.

This sequence belongs to the fimbrial protein family.

Its subcellular location is the fimbrium. Functionally, major structural component of PMF fimbriae. The protein is Major fimbrial subunit (pmfA) of Proteus mirabilis (strain HI4320).